The following is a 1234-amino-acid chain: Complement factor H (1234 aa).

Residues 1-18 form the signal peptide; the sequence is MRLSARIIWLILWTVCAA. Sushi domains follow at residues 19–82, 83–143, 144–207, 208–264, 265–322, 324–386, 387–444, 446–507, 508–566, 567–624, 627–685, 688–745, 750–804, 806–863, 865–933, 934–991, 992–1050, 1051–1109, 1112–1170, and 1171–1234; these read EDCK…ICRK, KPCG…LCEV, VKCL…RCVE, ILCT…FCEE, KRCS…RCTL, PCEF…VPCV, RKCV…KCIR, KTCS…SCIK, SCDM…SCYE, RECS…TCKG, ASCA…VCIE, RTCG…KCVA, EKCR…NCTS, TSCP…RCIE, IPCS…RCVG, LPCG…KCIK, TDCD…VCKD, NSCV…KCRD, GKCG…TCLH, and ACVI…PTCV. Cystine bridges form between Cys21/Cys66, Cys52/Cys80, Cys85/Cys129, Cys114/Cys141, Cys146/Cys192, Cys178/Cys205, Cys210/Cys251, Cys237/Cys262, Cys267/Cys309, Cys294/Cys320, Cys325/Cys374, Cys357/Cys385, Cys389/Cys431, Cys416/Cys442, Cys448/Cys494, Cys477/Cys505, Cys509/Cys553, Cys536/Cys564, Cys569/Cys610, Cys597/Cys622, Cys629/Cys672, Cys658/Cys683, Cys690/Cys732, Cys718/Cys743, Cys752/Cys791, Cys780/Cys802, Cys808/Cys850, Cys836/Cys861, Cys867/Cys920, Cys906/Cys931, Cys936/Cys978, Cys964/Cys989, Cys994/Cys1037, Cys1023/Cys1048, Cys1053/Cys1096, Cys1082/Cys1107, Cys1114/Cys1157, Cys1143/Cys1168, Cys1172/Cys1223, and Cys1206/Cys1233. N-linked (GlcNAc...) asparagine glycosylation is found at Asn676, Asn721, Asn773, and Asn801. The tract at residues 872–896 is disordered; that stretch reads TIEHGSINLPRSSEERRDSIESSSH. Residues 883–896 show a composition bias toward basic and acidic residues; the sequence is SSEERRDSIESSSH. N-linked (GlcNAc...) asparagine glycosylation is found at Asn1030 and Asn1061. At Ser1198 the chain carries Phosphoserine. Asn1225 carries an N-linked (GlcNAc...) asparagine glycan.

In terms of assembly, homodimer. Also forms homooligomers. Interacts with complement protein C3b; this interaction inhibits complement activation. Interacts with complement protein C3d. Interacts with CR3/ITGAM; this interaction mediates adhesion of neutrophils to pathogens leading to pathogen clearance. In terms of processing, sulfated on tyrosine residues. CFH is one of the most abundant complement components in blood where the liver is the major source of CFH protein in vivo. in addition, CFH is secreted by additional cell types including monocytes, fibroblasts, or endothelial cells.

It localises to the secreted. Its function is as follows. Glycoprotein that plays an essential role in maintaining a well-balanced immune response by modulating complement activation. Acts as a soluble inhibitor of complement, where its binding to self markers such as glycan structures prevents complement activation and amplification on cell surfaces. Accelerates the decay of the complement alternative pathway (AP) C3 convertase C3bBb, thus preventing local formation of more C3b, the central player of the complement amplification loop. As a cofactor of the serine protease factor I, CFH also regulates proteolytic degradation of already-deposited C3b. In addition, mediates several cellular responses through interaction with specific receptors. For example, interacts with CR3/ITGAM receptor and thereby mediates the adhesion of human neutrophils to different pathogens. In turn, these pathogens are phagocytosed and destroyed. In Mus musculus (Mouse), this protein is Complement factor H (Cfh).